A 158-amino-acid polypeptide reads, in one-letter code: GTP-dependent dephospho-CoA kinase (158 aa).

Positions 35, 36, 54, 56, 109, and 132 each coordinate GTP.

The protein belongs to the GTP-dependent DPCK family.

The enzyme catalyses 3'-dephospho-CoA + GTP = GDP + CoA + H(+). Its pathway is cofactor biosynthesis; coenzyme A biosynthesis. Catalyzes the GTP-dependent phosphorylation of the 3'-hydroxyl group of dephosphocoenzyme A to form coenzyme A (CoA). In Methanococcus vannielii (strain ATCC 35089 / DSM 1224 / JCM 13029 / OCM 148 / SB), this protein is GTP-dependent dephospho-CoA kinase.